A 304-amino-acid chain; its full sequence is Aspartate carbamoyltransferase catalytic subunit (304 aa).

2 residues coordinate carbamoyl phosphate: Arg-57 and Thr-58. Lys-85 contacts L-aspartate. Carbamoyl phosphate contacts are provided by Arg-107, His-134, and Gln-137. Positions 167 and 216 each coordinate L-aspartate. Residues Ala-260 and Pro-261 each contribute to the carbamoyl phosphate site.

Belongs to the aspartate/ornithine carbamoyltransferase superfamily. ATCase family. Heterododecamer (2C3:3R2) of six catalytic PyrB chains organized as two trimers (C3), and six regulatory PyrI chains organized as three dimers (R2).

The catalysed reaction is carbamoyl phosphate + L-aspartate = N-carbamoyl-L-aspartate + phosphate + H(+). The protein operates within pyrimidine metabolism; UMP biosynthesis via de novo pathway; (S)-dihydroorotate from bicarbonate: step 2/3. Catalyzes the condensation of carbamoyl phosphate and aspartate to form carbamoyl aspartate and inorganic phosphate, the committed step in the de novo pyrimidine nucleotide biosynthesis pathway. The protein is Aspartate carbamoyltransferase catalytic subunit of Fusobacterium nucleatum subsp. nucleatum (strain ATCC 25586 / DSM 15643 / BCRC 10681 / CIP 101130 / JCM 8532 / KCTC 2640 / LMG 13131 / VPI 4355).